An 897-amino-acid chain; its full sequence is Leucine--tRNA ligase (897 aa).

Residues 42–52 (PYPSGKLHMGH) carry the 'HIGH' region motif. Residues 645–649 (TMSKS) carry the 'KMSKS' region motif. Lysine 648 serves as a coordination point for ATP.

This sequence belongs to the class-I aminoacyl-tRNA synthetase family.

The protein localises to the cytoplasm. The catalysed reaction is tRNA(Leu) + L-leucine + ATP = L-leucyl-tRNA(Leu) + AMP + diphosphate. This Paracidovorax citrulli (strain AAC00-1) (Acidovorax citrulli) protein is Leucine--tRNA ligase.